A 77-amino-acid chain; its full sequence is U8-lycotoxin-Ls1i (77 aa).

The signal sequence occupies residues 1–20 (MKLIIFTGLVLFAIVSLIEV). Residues 21 to 26 (QADNER) constitute a propeptide that is removed on maturation.

The protein belongs to the neurotoxin 19 (CSTX) family. 08 (U8-Lctx) subfamily. In terms of processing, contains 4 disulfide bonds. Expressed by the venom gland.

It is found in the secreted. This is U8-lycotoxin-Ls1i from Lycosa singoriensis (Wolf spider).